The chain runs to 447 residues: UDP-N-acetylmuramate--L-alanine ligase (447 aa).

108-114 is a binding site for ATP; sequence GSHGKTS.

Belongs to the MurCDEF family.

It localises to the cytoplasm. It catalyses the reaction UDP-N-acetyl-alpha-D-muramate + L-alanine + ATP = UDP-N-acetyl-alpha-D-muramoyl-L-alanine + ADP + phosphate + H(+). The protein operates within cell wall biogenesis; peptidoglycan biosynthesis. Its function is as follows. Cell wall formation. In Listeria monocytogenes serotype 4a (strain HCC23), this protein is UDP-N-acetylmuramate--L-alanine ligase.